Here is a 462-residue protein sequence, read N- to C-terminus: Cysteine--tRNA ligase (462 aa).

C28 provides a ligand contact to Zn(2+). The 'HIGH' region signature appears at 30–40 (VTIYDLCHIGH). 3 residues coordinate Zn(2+): C211, H236, and E240. Positions 268-272 (KMSKS) match the 'KMSKS' region motif. Position 271 (K271) interacts with ATP.

The protein belongs to the class-I aminoacyl-tRNA synthetase family. Monomer. The cofactor is Zn(2+).

It is found in the cytoplasm. The catalysed reaction is tRNA(Cys) + L-cysteine + ATP = L-cysteinyl-tRNA(Cys) + AMP + diphosphate. The protein is Cysteine--tRNA ligase of Aliivibrio salmonicida (strain LFI1238) (Vibrio salmonicida (strain LFI1238)).